The chain runs to 361 residues: Putative geranylgeranyl pyrophosphate synthase 8, chloroplastic (361 aa).

The N-terminal 39 residues, 1-39 (MATTVHLSSFSLFIQSRGRRDNSISSVKSLKKRTGLSPS), are a transit peptide targeting the chloroplast. Residues 24 to 58 (ISSVKSLKKRTGLSPSSALTSQGGRDMIPPQGKSN) form a disordered region. Residues 36–46 (LSPSSALTSQG) show a composition bias toward polar residues. Isopentenyl diphosphate-binding residues include K107, R110, and H139. Residues D146 and D152 each coordinate Mg(2+). Dimethylallyl diphosphate is bound at residue R157. Residue R158 participates in isopentenyl diphosphate binding. Residues K246, T247, Q284, K301, and K311 each contribute to the dimethylallyl diphosphate site.

Belongs to the FPP/GGPP synthase family. Monomer. It depends on Mg(2+) as a cofactor.

The protein localises to the plastid. It is found in the chloroplast. It catalyses the reaction isopentenyl diphosphate + dimethylallyl diphosphate = (2E)-geranyl diphosphate + diphosphate. The catalysed reaction is isopentenyl diphosphate + (2E)-geranyl diphosphate = (2E,6E)-farnesyl diphosphate + diphosphate. It carries out the reaction isopentenyl diphosphate + (2E,6E)-farnesyl diphosphate = (2E,6E,10E)-geranylgeranyl diphosphate + diphosphate. Its pathway is isoprenoid biosynthesis; farnesyl diphosphate biosynthesis; farnesyl diphosphate from geranyl diphosphate and isopentenyl diphosphate: step 1/1. It participates in isoprenoid biosynthesis; geranyl diphosphate biosynthesis; geranyl diphosphate from dimethylallyl diphosphate and isopentenyl diphosphate: step 1/1. It functions in the pathway isoprenoid biosynthesis; geranylgeranyl diphosphate biosynthesis; geranylgeranyl diphosphate from farnesyl diphosphate and isopentenyl diphosphate: step 1/1. In terms of biological role, catalyzes the trans-addition of the three molecules of IPP onto DMAPP to form geranylgeranyl pyrophosphate. The chain is Putative geranylgeranyl pyrophosphate synthase 8, chloroplastic from Arabidopsis thaliana (Mouse-ear cress).